Reading from the N-terminus, the 325-residue chain is Chain length determinant protein (325 aa).

The Cytoplasmic portion of the chain corresponds to Met1–Lys31. A helical transmembrane segment spans residues Met32–Ala52. The Periplasmic portion of the chain corresponds to Lys53 to Lys294. Residues Ala295–Gly315 form a helical membrane-spanning segment. Topologically, residues Arg316–Lys325 are cytoplasmic.

It belongs to the WzzB/Cld/Rol family.

The protein localises to the cell inner membrane. It participates in bacterial outer membrane biogenesis; lipopolysaccharide biosynthesis. Its function is as follows. Confers a modal distribution of chain length on the O-antigen component of lipopolysaccharide (LPS). Gives rise to a reduced number of short chain molecules and increases in numbers of longer molecules, with a modal value of 13 (in strain O111/M92) and of 17 (in strain K12). The protein is Chain length determinant protein (wzzB) of Escherichia coli.